The sequence spans 353 residues: Mitochondrial distribution and morphology protein 10 (353 aa).

The protein belongs to the MDM10 family. In terms of assembly, component of the ER-mitochondria encounter structure (ERMES) or MDM complex, composed of MMM1, MDM10, MDM12 and MDM34. Associates with the mitochondrial outer membrane sorting assembly machinery SAM(core) complex.

It is found in the mitochondrion outer membrane. In terms of biological role, component of the ERMES/MDM complex, which serves as a molecular tether to connect the endoplasmic reticulum and mitochondria. Components of this complex are involved in the control of mitochondrial shape and protein biogenesis and may function in phospholipid exchange. MDM10 is involved in the late assembly steps of the general translocase of the mitochondrial outer membrane (TOM complex). Functions in the TOM40-specific route of the assembly of outer membrane beta-barrel proteins, including the association of TOM40 with the receptor TOM22 and small TOM proteins. Can associate with the SAM(core) complex as well as the MDM12-MMM1 complex, both involved in late steps of the major beta-barrel assembly pathway, that is responsible for biogenesis of all outer membrane beta-barrel proteins. May act as a switch that shuttles between both complexes and channels precursor proteins into the TOM40-specific pathway. Plays a role in mitochondrial morphology and in the inheritance of mitochondria. This Yarrowia lipolytica (strain CLIB 122 / E 150) (Yeast) protein is Mitochondrial distribution and morphology protein 10.